A 377-amino-acid chain; its full sequence is tRNA-specific 2-thiouridylase MnmA (377 aa).

ATP-binding positions include 17-24 (GMSGGVDS) and Met-43. The interaction with target base in tRNA stretch occupies residues 103–105 (NPD). Cys-108 acts as the Nucleophile in catalysis. An intrachain disulfide couples Cys-108 to Cys-204. Gly-132 provides a ligand contact to ATP. The interval 154 to 156 (KDQ) is interaction with tRNA. The active-site Cysteine persulfide intermediate is the Cys-204. The interval 316–317 (RY) is interaction with tRNA.

This sequence belongs to the MnmA/TRMU family.

It is found in the cytoplasm. It catalyses the reaction S-sulfanyl-L-cysteinyl-[protein] + uridine(34) in tRNA + AH2 + ATP = 2-thiouridine(34) in tRNA + L-cysteinyl-[protein] + A + AMP + diphosphate + H(+). Catalyzes the 2-thiolation of uridine at the wobble position (U34) of tRNA, leading to the formation of s(2)U34. This is tRNA-specific 2-thiouridylase MnmA from Pseudomonas fluorescens (strain ATCC BAA-477 / NRRL B-23932 / Pf-5).